The following is a 306-amino-acid chain: Agmatinase (306 aa).

Residues H126, D149, H151, D153, D230, and D232 each coordinate Mn(2+).

Belongs to the arginase family. Agmatinase subfamily. Mn(2+) is required as a cofactor.

It carries out the reaction agmatine + H2O = urea + putrescine. Its pathway is amine and polyamine biosynthesis; putrescine biosynthesis via agmatine pathway; putrescine from agmatine: step 1/1. Its function is as follows. Catalyzes the formation of putrescine from agmatine. In Cronobacter sakazakii (strain ATCC BAA-894) (Enterobacter sakazakii), this protein is Agmatinase.